The chain runs to 102 residues: MEYIYAALLLHSAGKEITEDAIKAVLSAAGVEVDDARVKALVAGLEGVDIEEAIANAAMPVAAAPAAAAPAAAAEEKKEEEKKEEKKEEDTAAVAGLAALFG.

The disordered stretch occupies residues 69–91 (APAAAAEEKKEEEKKEEKKEEDT). The span at 74-90 (AEEKKEEEKKEEKKEED) shows a compositional bias: basic and acidic residues.

Belongs to the eukaryotic ribosomal protein P1/P2 family. As to quaternary structure, part of the 50S ribosomal subunit. Homodimer, it forms part of the ribosomal stalk which helps the ribosome interact with GTP-bound translation factors. Forms a heptameric uL10/P0(P1)2(P1)2(P1)2 complex, where uL10/P0 forms an elongated spine to which the P1 dimers bind in a sequential fashion.

Its function is as follows. Forms part of the ribosomal stalk, playing a central role in the interaction of the ribosome with GTP-bound translation factors. The chain is Large ribosomal subunit protein P1 from Methanocaldococcus jannaschii (strain ATCC 43067 / DSM 2661 / JAL-1 / JCM 10045 / NBRC 100440) (Methanococcus jannaschii).